The following is a 444-amino-acid chain: Phosphoglucosamine mutase (444 aa).

Ser102 acts as the Phosphoserine intermediate in catalysis. Positions 102, 241, 243, and 245 each coordinate Mg(2+). Ser102 carries the post-translational modification Phosphoserine.

It belongs to the phosphohexose mutase family. It depends on Mg(2+) as a cofactor. Post-translationally, activated by phosphorylation.

The catalysed reaction is alpha-D-glucosamine 1-phosphate = D-glucosamine 6-phosphate. Catalyzes the conversion of glucosamine-6-phosphate to glucosamine-1-phosphate. In Actinobacillus succinogenes (strain ATCC 55618 / DSM 22257 / CCUG 43843 / 130Z), this protein is Phosphoglucosamine mutase.